The primary structure comprises 173 residues: Crossover junction endodeoxyribonuclease RuvC (173 aa).

Active-site residues include aspartate 8, glutamate 67, and aspartate 139. Mg(2+) is bound by residues aspartate 8, glutamate 67, and aspartate 139.

The protein belongs to the RuvC family. In terms of assembly, homodimer which binds Holliday junction (HJ) DNA. The HJ becomes 2-fold symmetrical on binding to RuvC with unstacked arms; it has a different conformation from HJ DNA in complex with RuvA. In the full resolvosome a probable DNA-RuvA(4)-RuvB(12)-RuvC(2) complex forms which resolves the HJ. The cofactor is Mg(2+).

The protein localises to the cytoplasm. The catalysed reaction is Endonucleolytic cleavage at a junction such as a reciprocal single-stranded crossover between two homologous DNA duplexes (Holliday junction).. Functionally, the RuvA-RuvB-RuvC complex processes Holliday junction (HJ) DNA during genetic recombination and DNA repair. Endonuclease that resolves HJ intermediates. Cleaves cruciform DNA by making single-stranded nicks across the HJ at symmetrical positions within the homologous arms, yielding a 5'-phosphate and a 3'-hydroxyl group; requires a central core of homology in the junction. The consensus cleavage sequence is 5'-(A/T)TT(C/G)-3'. Cleavage occurs on the 3'-side of the TT dinucleotide at the point of strand exchange. HJ branch migration catalyzed by RuvA-RuvB allows RuvC to scan DNA until it finds its consensus sequence, where it cleaves and resolves the cruciform DNA. The sequence is that of Crossover junction endodeoxyribonuclease RuvC from Shewanella putrefaciens (strain CN-32 / ATCC BAA-453).